The chain runs to 147 residues: Peptide methionine sulfoxide reductase MsrB (147 aa).

In terms of domain architecture, MsrB spans 25-147 (DEYWREHLTE…NSVSLIFNKK (123 aa)). Positions 64, 67, 113, and 116 each coordinate Zn(2+). Cys-136 acts as the Nucleophile in catalysis.

Belongs to the MsrB Met sulfoxide reductase family. It depends on Zn(2+) as a cofactor.

The enzyme catalyses L-methionyl-[protein] + [thioredoxin]-disulfide + H2O = L-methionyl-(R)-S-oxide-[protein] + [thioredoxin]-dithiol. In Vibrio cholerae serotype O1 (strain ATCC 39541 / Classical Ogawa 395 / O395), this protein is Peptide methionine sulfoxide reductase MsrB.